The sequence spans 219 residues: Orotate phosphoribosyltransferase (219 aa).

Lysine 26 contributes to the 5-phospho-alpha-D-ribose 1-diphosphate binding site. Residue 34 to 35 (FF) coordinates orotate. 5-phospho-alpha-D-ribose 1-diphosphate contacts are provided by residues 72–73 (YK), arginine 98, lysine 99, lysine 102, histidine 104, and 124–132 (DDVITAGTA). 2 residues coordinate orotate: threonine 128 and arginine 156.

Belongs to the purine/pyrimidine phosphoribosyltransferase family. PyrE subfamily. Homodimer. It depends on Mg(2+) as a cofactor.

It catalyses the reaction orotidine 5'-phosphate + diphosphate = orotate + 5-phospho-alpha-D-ribose 1-diphosphate. It functions in the pathway pyrimidine metabolism; UMP biosynthesis via de novo pathway; UMP from orotate: step 1/2. Catalyzes the transfer of a ribosyl phosphate group from 5-phosphoribose 1-diphosphate to orotate, leading to the formation of orotidine monophosphate (OMP). This chain is Orotate phosphoribosyltransferase, found in Xanthomonas oryzae pv. oryzae (strain MAFF 311018).